The chain runs to 111 residues: Movement protein TGB2 (111 aa).

Residues 1–16 (MSSHQNFLTPPPDHSK) are Cytoplasmic-facing. Residues 17-37 (AILAVAVGVGLAIVLHFSLSY) traverse the membrane as a helical segment. At 38–72 (KLPSPGDNIHSLPFGGTYRDGTKSIIYNSPHRGPG) the chain is on the lumenal side. A helical membrane pass occupies residues 73–93 (QSGALPIITVFAIIECTLHVL). Residues 94–111 (RKRDNPVRPQHSDCPNCS) are Cytoplasmic-facing.

It belongs to the Tymovirales TGBp2 protein family.

It localises to the host endoplasmic reticulum membrane. Functionally, plays a role in viral cell-to-cell propagation, by facilitating genome transport to neighboring plant cells through plasmosdesmata,. The chain is Movement protein TGB2 from Carica papaya (Papaya).